A 424-amino-acid chain; its full sequence is Serine--tRNA ligase (424 aa).

Position 230 to 232 (230 to 232 (TAE)) interacts with L-serine. Residue 261–263 (RSE) participates in ATP binding. An L-serine-binding site is contributed by E284. Position 348–351 (348–351 (EISS)) interacts with ATP. Position 382 (S382) interacts with L-serine.

It belongs to the class-II aminoacyl-tRNA synthetase family. Type-1 seryl-tRNA synthetase subfamily. In terms of assembly, homodimer. The tRNA molecule binds across the dimer.

Its subcellular location is the cytoplasm. The catalysed reaction is tRNA(Ser) + L-serine + ATP = L-seryl-tRNA(Ser) + AMP + diphosphate + H(+). The enzyme catalyses tRNA(Sec) + L-serine + ATP = L-seryl-tRNA(Sec) + AMP + diphosphate + H(+). Its pathway is aminoacyl-tRNA biosynthesis; selenocysteinyl-tRNA(Sec) biosynthesis; L-seryl-tRNA(Sec) from L-serine and tRNA(Sec): step 1/1. Its function is as follows. Catalyzes the attachment of serine to tRNA(Ser). Is also able to aminoacylate tRNA(Sec) with serine, to form the misacylated tRNA L-seryl-tRNA(Sec), which will be further converted into selenocysteinyl-tRNA(Sec). This chain is Serine--tRNA ligase, found in Solibacter usitatus (strain Ellin6076).